A 372-amino-acid polypeptide reads, in one-letter code: Methylthioribose-1-phosphate isomerase (372 aa).

D252 (proton donor) is an active-site residue.

The protein belongs to the eIF-2B alpha/beta/delta subunits family. MtnA subfamily.

It is found in the cytoplasm. It localises to the nucleus. The enzyme catalyses 5-(methylsulfanyl)-alpha-D-ribose 1-phosphate = 5-(methylsulfanyl)-D-ribulose 1-phosphate. The protein operates within amino-acid biosynthesis; L-methionine biosynthesis via salvage pathway; L-methionine from S-methyl-5-thio-alpha-D-ribose 1-phosphate: step 1/6. In terms of biological role, catalyzes the interconversion of methylthioribose-1-phosphate (MTR-1-P) into methylthioribulose-1-phosphate (MTRu-1-P). In Yarrowia lipolytica (strain CLIB 122 / E 150) (Yeast), this protein is Methylthioribose-1-phosphate isomerase.